A 492-amino-acid polypeptide reads, in one-letter code: Pentatricopeptide repeat-containing protein At4g21705, mitochondrial (492 aa).

Residues 1–17 (MNILRRIPANLIASRYY) constitute a mitochondrion transit peptide. PPR repeat units lie at residues 125 to 159 (NDKT…GFVT), 160 to 194 (SSLT…NVAP), 195 to 225 (DNYS…MERR), 231 to 261 (DWNT…SENR), 266 to 296 (DGEG…EKDV), 301 to 335 (INQD…GNCY), 336 to 370 (DFRV…GKAT), and 371 to 405 (TPES…EVGS).

It belongs to the PPR family. P subfamily.

It is found in the mitochondrion. This chain is Pentatricopeptide repeat-containing protein At4g21705, mitochondrial, found in Arabidopsis thaliana (Mouse-ear cress).